Consider the following 349-residue polypeptide: Glycerol-3-phosphate dehydrogenase [NAD(P)+] (349 aa).

NADPH-binding residues include Ser12, Trp13, and Lys107. The sn-glycerol 3-phosphate site is built by Lys107, Gly138, and Ser140. Residue Ala142 coordinates NADPH. Residues Lys193, Asp246, Ser256, Arg257, and Asn258 each coordinate sn-glycerol 3-phosphate. The active-site Proton acceptor is the Lys193. Arg257 lines the NADPH pocket. Positions 281 and 283 each coordinate NADPH.

The protein belongs to the NAD-dependent glycerol-3-phosphate dehydrogenase family.

The protein localises to the cytoplasm. The catalysed reaction is sn-glycerol 3-phosphate + NAD(+) = dihydroxyacetone phosphate + NADH + H(+). The enzyme catalyses sn-glycerol 3-phosphate + NADP(+) = dihydroxyacetone phosphate + NADPH + H(+). It functions in the pathway membrane lipid metabolism; glycerophospholipid metabolism. Its function is as follows. Catalyzes the reduction of the glycolytic intermediate dihydroxyacetone phosphate (DHAP) to sn-glycerol 3-phosphate (G3P), the key precursor for phospholipid synthesis. The polypeptide is Glycerol-3-phosphate dehydrogenase [NAD(P)+] (Pelotomaculum thermopropionicum (strain DSM 13744 / JCM 10971 / SI)).